Here is a 200-residue protein sequence, read N- to C-terminus: Phospholipase A2 inhibitor LNF2 (200 aa).

Positions 1-19 are cleaved as a signal peptide; the sequence is MKSLHTICLLFIFVARGNS. 8 disulfide bridges follow: C22/C46, C25/C32, C39/C67, C73/C94, C95/C100, C118/C143, C136/C165, and C169/C191. An N-linked (GlcNAc...) asparagine glycan is attached at N176.

The protein belongs to the CNF-like-inhibitor family. In terms of assembly, occurs as a mixture of oligomers. Tetrameric arrangement appears to be the predominant quaternary structure. In terms of tissue distribution, expressed by the liver.

The protein resides in the secreted. Its function is as follows. Inhibits the enzymatic activity of phospholipase A2 (PA2). The chain is Phospholipase A2 inhibitor LNF2 from Lachesis muta muta (Bushmaster).